The sequence spans 896 residues: Alanine--tRNA ligase (896 aa).

Zn(2+) contacts are provided by histidine 580, histidine 584, cysteine 683, and histidine 687.

The protein belongs to the class-II aminoacyl-tRNA synthetase family. Requires Zn(2+) as cofactor.

The protein localises to the cytoplasm. It catalyses the reaction tRNA(Ala) + L-alanine + ATP = L-alanyl-tRNA(Ala) + AMP + diphosphate. Catalyzes the attachment of alanine to tRNA(Ala) in a two-step reaction: alanine is first activated by ATP to form Ala-AMP and then transferred to the acceptor end of tRNA(Ala). Also edits incorrectly charged Ser-tRNA(Ala) and Gly-tRNA(Ala) via its editing domain. The sequence is that of Alanine--tRNA ligase from Mycolicibacterium smegmatis (strain ATCC 700084 / mc(2)155) (Mycobacterium smegmatis).